A 406-amino-acid polypeptide reads, in one-letter code: Probable endo-xylogalacturonan hydrolase A (406 aa).

An N-terminal signal peptide occupies residues 1-18; the sequence is MISLNSIFLLSLVGLSRA. The tract at residues 20–49 is disordered; the sequence is PSRSETSPDRTIKPRAACTPTAGGSSSTDD. PbH1 repeat units follow at residues 183 to 213, 214 to 235, 237 to 257, 266 to 289, 299 to 320, and 368 to 390; these read TSNAQFTSLTMDATSNSDNLPKNTDAFDIGA, STYVTISSVAITNDDDCVAFKP, ANYVTVENVSCTGSHGISVGS, VQNVYARNITMINSSKAAGIKTYP, VKNATFEDFIVDGCDYAFQIQS, and TCDVTISGFEVKAPSGDAKILCG. The active-site Proton donor is the aspartate 228. N-linked (GlcNAc...) asparagine glycosylation occurs at asparagine 244. The active site involves histidine 251. Residues asparagine 273, asparagine 278, and asparagine 301 are each glycosylated (N-linked (GlcNAc...) asparagine).

It belongs to the glycosyl hydrolase 28 family.

The protein localises to the secreted. In terms of biological role, pectinolytic enzyme involved in the degradation of xylogalacturonan (xga), a galacturonan backbone heavily substituted with xylose, and which is one important component of the hairy regions of pectin. Activity requires a galacturonic acid backbone substituted with xylose. The polypeptide is Probable endo-xylogalacturonan hydrolase A (xghA) (Aspergillus flavus (strain ATCC 200026 / FGSC A1120 / IAM 13836 / NRRL 3357 / JCM 12722 / SRRC 167)).